A 504-amino-acid polypeptide reads, in one-letter code: Cytochrome P450 2K1 (504 aa).

Position 447 (Cys447) interacts with heme.

It belongs to the cytochrome P450 family. The cofactor is heme.

The protein resides in the endoplasmic reticulum membrane. It localises to the microsome membrane. It catalyses the reaction an organic molecule + reduced [NADPH--hemoprotein reductase] + O2 = an alcohol + oxidized [NADPH--hemoprotein reductase] + H2O + H(+). This Oncorhynchus mykiss (Rainbow trout) protein is Cytochrome P450 2K1 (cyp2k1).